A 330-amino-acid polypeptide reads, in one-letter code: Phospholipase C (330 aa).

The signal sequence occupies residues 1-34; that stretch reads MVKKTKSNSLKKVATLALANLLLVGALTDNSAKA. An intrachain disulfide couples C155 to C191.

Belongs to the neutral sphingomyelinase family. As to quaternary structure, monomer.

The protein resides in the secreted. The catalysed reaction is a 1,2-diacyl-sn-glycero-3-phosphocholine + H2O = phosphocholine + a 1,2-diacyl-sn-glycerol + H(+). In terms of biological role, bacterial hemolysins are exotoxins that attack blood cell membranes and cause cell rupture. Beta-hemolysin is a phospholipase C with specific activity toward sphingomyelins. Has a high specificity for sphingomyelin, hydrolyzes lysophosphatidylcholine at a much lower rate, but has no activity towards phosphatidylcholine, phosphatidylethanolamine, or phosphatidylserine. In Staphylococcus aureus (strain NCTC 8325 / PS 47), this protein is Phospholipase C (hlb).